Here is a 346-residue protein sequence, read N- to C-terminus: MDENKKRALAAALGQIERQFGKGAVMRMGDHERQAIPAISTGSLGLDIALGIGGLPKGRIVEIYGPESSGKTTLTLSVIAEAQKQGATCAFVDAEHALDPDYAGKLGVNVDDLLVSQPDTGEQALEITDMLVRSNAVDVIIVDSVAALVPKAEIEGEMGDAHVGLQARLMSQALRKITGNIKNANCLVIFINQIRMKIGVMFGNPETTTGGNALKFYASVRLDIRRTGAVKEGDEVVGSETRVKVVKNKVSPPFRQAEFQILYGKGIYRTGEIIDLGVQLGLVEKSGAWYSYQGSKIGQGKANAAKYLEDNPEIGSVLEKTIRDQLLAKSGPVKADAEEVADAEAD.

65–72 (GPESSGKT) contacts ATP.

This sequence belongs to the RecA family.

It localises to the cytoplasm. In terms of biological role, can catalyze the hydrolysis of ATP in the presence of single-stranded DNA, the ATP-dependent uptake of single-stranded DNA by duplex DNA, and the ATP-dependent hybridization of homologous single-stranded DNAs. It interacts with LexA causing its activation and leading to its autocatalytic cleavage. This chain is Protein RecA, found in Pseudomonas aeruginosa (strain UCBPP-PA14).